The sequence spans 475 residues: Protein EARLY HEADING DATE 2 (475 aa).

Positions 1–16 (MLLSDLSSDQEATGSN) are enriched in polar residues. The tract at residues 1-26 (MLLSDLSSDQEATGSNSHGGGGGDRM) is disordered. C2H2-type zinc fingers lie at residues 105–127 (FVCEVCNKGFQRDQNLQLHRRGH) and 155–185 (YVCPEPTCVHHDPARALGDLTGIKKHFSRKH). 2 short sequence motifs (nuclear localization signal) span residues 123–130 (HRRGHNLP) and 177–184 (IKKHFSRK). Residues 190 to 213 (WRCERCGKRYAVHSDWKAHVKNCG) form a C2H2-type 2; degenerate zinc finger. Positions 192, 195, 208, 212, 219, 221, 234, and 238 each coordinate Zn(2+). Residues 217–240 (YRCDCGILFSRKDSLLTHRAFCDA) form a CCHC-type 2; atypical zinc finger. An SHR-binding region spans residues 227 to 239 (RKDSLLTHRAFCD).

In terms of tissue distribution, mostly expressed in developing leaves (more in sheaths than in blades, especially in the outer epidermal cell of immature leaves and in the region immediately beneath the meristem where internodes are visible) and panicles, and, at very low levels, around the shoot apex and in roots.

It localises to the nucleus. Functionally, transcription activator that acts as a flowering master switch in both long and short days, independently of the circadian clock. Promotes flowering upstream of HD1 by up-regulating FTL1, FTL4, FTL5, FTL6, EHD1, HD3A and RFT1. Seems to repress FTL11 expression. May recognize the consensus motif 5'-TTTGTCGTAAT-3' in target gene promoters. The polypeptide is Protein EARLY HEADING DATE 2 (Oryza sativa subsp. japonica (Rice)).